A 146-amino-acid chain; its full sequence is Hemoglobin subunit beta (146 aa).

The 145-residue stretch at 2-146 (HWTAEEKQLI…VAHALARKYH (145 aa)) folds into the Globin domain. Heme b-binding residues include His63 and His92.

The protein belongs to the globin family. As to quaternary structure, heterotetramer of two alpha chains and two beta chains. Red blood cells.

Functionally, involved in oxygen transport from the lung to the various peripheral tissues. The protein is Hemoglobin subunit beta (HBB) of Phalacrocorax carbo (Great cormorant).